Reading from the N-terminus, the 125-residue chain is Small ribosomal subunit protein uS12 (125 aa).

The interval 1–28 (MPTISQLIGSERKRLTRKTKSPALKSCP) is disordered. Residue Asp89 is modified to 3-methylthioaspartic acid. The tract at residues 104–125 (TAGVKDRRQSRSKYGAKAPKNN) is disordered.

The protein belongs to the universal ribosomal protein uS12 family. In terms of assembly, part of the 30S ribosomal subunit. Contacts proteins S8 and S17. May interact with IF1 in the 30S initiation complex.

Its function is as follows. With S4 and S5 plays an important role in translational accuracy. In terms of biological role, interacts with and stabilizes bases of the 16S rRNA that are involved in tRNA selection in the A site and with the mRNA backbone. Located at the interface of the 30S and 50S subunits, it traverses the body of the 30S subunit contacting proteins on the other side and probably holding the rRNA structure together. The combined cluster of proteins S8, S12 and S17 appears to hold together the shoulder and platform of the 30S subunit. The sequence is that of Small ribosomal subunit protein uS12 from Prochlorococcus marinus (strain MIT 9515).